The primary structure comprises 72 residues: MFTMKKSLLLLFFLGMISLSLCEQERGADEDEGEVEEQIKRSIWEGIKNAGKGFLVSILDKVRCKVAGGCNP.

An N-terminal signal peptide occupies residues 1-22 (MFTMKKSLLLLFFLGMISLSLC). Residues 23–42 (EQERGADEDEGEVEEQIKRS) constitute a propeptide that is removed on maturation. Cysteine 64 and cysteine 70 are oxidised to a cystine.

Expressed by the skin glands.

It localises to the secreted. Its function is as follows. Antimicrobial peptide. Active against the Gram-positive bacteria S.aureus FDA209P (MIC=9.8 ug/ml) and B.subtilis ATCC 6633 (MIC&gt;64 ug/ml), and the Gram-negative bacteria E.coli O111 (MIC=19.6 ug/ml) and E.coli ATCC 25922 (MIC=9.8 ug/ml). Not active against the fungus C.albicans. In Sylvirana guentheri (Gunther's frog), this protein is Brevinin-2GHc.